The following is a 149-amino-acid chain: Hut operon positive regulatory protein (149 aa).

It belongs to the HutP family. As to quaternary structure, homohexamer.

Its function is as follows. Antiterminator that binds to cis-acting regulatory sequences on the mRNA in the presence of histidine, thereby suppressing transcription termination and activating the hut operon for histidine utilization. This is Hut operon positive regulatory protein from Geobacillus thermodenitrificans (strain NG80-2).